The sequence spans 111 residues: SRA stem-loop-interacting RNA-binding protein, mitochondrial (111 aa).

The RRM domain occupies 19 to 96 (PVAFVRKIPW…VKLHVQPQRP (78 aa)). The tract at residues 92–111 (QPQRPKALQGDQTSDEEKDF) is disordered. A Phosphothreonine modification is found at threonine 104. Residue serine 105 is modified to Phosphoserine.

Its subcellular location is the mitochondrion. The protein resides in the nucleus. RNA-binding protein that acts as a nuclear receptor corepressor. Probably acts by binding the SRA RNA, and repressing the SRA-mediated nuclear receptor coactivation. Binds the STR7 loop of SRA RNA. Also able to repress glucocorticoid (GR), androgen (AR), thyroid (TR) and VDR-mediated transactivation. This Bos taurus (Bovine) protein is SRA stem-loop-interacting RNA-binding protein, mitochondrial (SLIRP).